A 621-amino-acid chain; its full sequence is MATNPGLFTEWPWKKLGSFKYVLLAPWVAHGWYEVATKGRREVDLGYIAILPSLLLRMLHNQAWITISRLQNARGRRQIVRRGIEFDQVDRERNWDDQIILSGILLYLGALYVPGGQHLPLWRTDGAGLIALLHAGPVEFLYYWFHRALHHHFLYTRYHSHHHSSIVTEPITSVIHPFAELVAYELLFSIPLIACALTGTASIIAFEMYLIYIDFMNNMGHCNFELVPSWLFTWFPPLKYLMYTPSFHSLHHTQFRTNYSLFMPFYDYIYNTMDKSSDTLYENSLKNNDEEEAVDVVHLTHLTTLHSIYHMRPGFAEFASRPYVSRWYMRMMWPLSWLSMVLTWTYGSSFTVERNVMKKIRMQSWAIPRYSFHYGLDWEKEAINDLIEKAVCEADKNGAKVVSLGLLNQAHTLNKSGEQYLLKYPKLGARIVDGTSLAAAVVVNSIPQGTDQVILAGNVSKVARAVAQALCKKNIKVTMTNKQDYHLLKPEIPETVADNLSFSKTGTAKVWLIGDGLDSAEQFRAQKGTLFIPYSQFPPKMVRKDSCSYSTTPAMAVPKTLQNVHSCENWLPRRVMSAWRIAGILHALEGWNEHECGDKVLDMDKVWSAAIMHGFCPVAQG.

5 helical membrane-spanning segments follow: residues 99-119, 126-146, 186-206, 224-244, and 332-352; these read IILS…GQHL, GAGL…YWFH, LLFS…IIAF, FELV…LMYT, and MWPL…SFTV. The Fatty acid hydroxylase domain occupies 138–272; the sequence is VEFLYYWFHR…MPFYDYIYNT (135 aa).

Belongs to the sterol desaturase family. As to quaternary structure, homodimer.

It localises to the endoplasmic reticulum membrane. The enzyme catalyses a long-chain fatty aldehyde + 2 NADPH + O2 + H(+) = a long-chain alkane + formate + 2 NADP(+) + H2O. Aldehyde decarbonylase involved in the conversion of aldehydes to alkanes. Core component of a very-long-chain alkane synthesis complex. The polypeptide is Very-long-chain aldehyde decarbonylase GL1-5 (Oryza sativa subsp. indica (Rice)).